Reading from the N-terminus, the 225-residue chain is Membrane protein (225 aa).

The Virion surface portion of the chain corresponds to 1-20; it reads MDNTTNCTLGTEQAVQLFKE. A helical transmembrane segment spans residues 21 to 41; that stretch reads YNLFVTAFLLFLTILLQYGYA. Over 42 to 51 the chain is Intravirion; sequence TRNKVIYILK. The chain crosses the membrane as a helical span at residues 52–72; that stretch reads MIVLWCFWPLNIAVGAISCIY. Residues 73–77 lie on the Virion surface side of the membrane; that stretch reads PPNTG. The helical transmembrane segment at 78-98 threads the bilayer; it reads GLVAAIILTVFACLSFIGYWI. Topologically, residues 99-225 are intravirion; sequence QSFRLFKRCR…VATGGSSLYT (127 aa).

The protein belongs to the gammacoronaviruses M protein family. In terms of assembly, homomultimer. Interacts with envelope E protein in the budding compartment of the host cell, which is located between endoplasmic reticulum and the Golgi complex. Forms a complex with HE and S proteins. Interacts with nucleocapsid N protein. This interaction probably participates in RNA packaging into the virus.

It localises to the virion membrane. The protein localises to the host Golgi apparatus membrane. Its function is as follows. Component of the viral envelope that plays a central role in virus morphogenesis and assembly via its interactions with other viral proteins. This chain is Membrane protein, found in Avian infectious bronchitis virus (strain 6/82) (IBV).